A 263-amino-acid polypeptide reads, in one-letter code: NADH dehydrogenase [ubiquinone] iron-sulfur protein 3, mitochondrial (263 aa).

Residues Met1–Arg35 constitute a mitochondrion transit peptide.

Belongs to the complex I 30 kDa subunit family. Core subunit of respiratory chain NADH dehydrogenase (Complex I) which is composed of 45 different subunits. Interacts with NDUFAF3. Interacts with RAB5IF. Found in subcomplexes containing subunits NDUFS2, MT-ND1 and NDUFA13.

The protein resides in the mitochondrion inner membrane. The catalysed reaction is a ubiquinone + NADH + 5 H(+)(in) = a ubiquinol + NAD(+) + 4 H(+)(out). Its function is as follows. Core subunit of the mitochondrial membrane respiratory chain NADH dehydrogenase (Complex I) which catalyzes electron transfer from NADH through the respiratory chain, using ubiquinone as an electron acceptor. Essential for the catalytic activity and assembly of complex I. This is NADH dehydrogenase [ubiquinone] iron-sulfur protein 3, mitochondrial (Ndufs3) from Mus musculus (Mouse).